A 194-amino-acid polypeptide reads, in one-letter code: Glycerol-3-phosphate acyltransferase 2 (194 aa).

5 consecutive transmembrane segments (helical) span residues 1 to 21, 64 to 84, 112 to 132, 135 to 155, and 156 to 173; these read MWLL…AYVV, VLAV…LAAL, LAMA…VVIF, YISL…IYFH, and RPWP…LVIY.

It belongs to the PlsY family. In terms of assembly, probably interacts with PlsX.

Its subcellular location is the cell membrane. It carries out the reaction an acyl phosphate + sn-glycerol 3-phosphate = a 1-acyl-sn-glycero-3-phosphate + phosphate. The protein operates within lipid metabolism; phospholipid metabolism. In terms of biological role, catalyzes the transfer of an acyl group from acyl-phosphate (acyl-PO(4)) to glycerol-3-phosphate (G3P) to form lysophosphatidic acid (LPA). This enzyme utilizes acyl-phosphate as fatty acyl donor, but not acyl-CoA or acyl-ACP. This chain is Glycerol-3-phosphate acyltransferase 2, found in Moorella thermoacetica (strain ATCC 39073 / JCM 9320).